The sequence spans 999 residues: Nonsense-mediated mRNA decay factor SMG8 (999 aa).

Disordered regions lie at residues 15-42 (SAWT…EPPW), 83-136 (QDPG…GNRT), and 287-307 (PPRN…PKRR). A compositionally biased stretch (low complexity) spans 18 to 27 (TSSESPEGSP). The span at 100-120 (GEAGGAGDPGAGAGAGAGAGA) shows a compositional bias: gly residues. Positions 287–297 (PPRNQDPAHPD) are enriched in basic and acidic residues. The span at 298–307 (KPKKHSPKRR) shows a compositional bias: basic residues. Phosphoserine occurs at positions 477 and 676. The tract at residues 661 to 734 (FEPSTPDPAP…GDNPEVHGQG (74 aa)) is disordered. Over residues 683-692 (DADKLKEKEP) the composition is skewed to basic and acidic residues. Over residues 693 to 714 (QTQGESTSLSLALSLGQSTDSL) the composition is skewed to polar residues. Residues S750 and S903 each carry the phosphoserine modification. R906 bears the Omega-N-methylarginine mark.

The protein belongs to the SMG8 family. Component of the SMG1C complex composed of SMG1, SMG8 and SMG9; the recruitment of SMG8 to SMG1 N-terminus induces a large conformational change in the SMG1 C-terminal head domain containing the catalytic domain. Forms heterodimers with SMG9; this assembly form may represent a SMG1C intermediate form. In terms of processing, phosphorylated by SMG1.

In terms of biological role, involved in nonsense-mediated decay (NMD) of mRNAs containing premature stop codons. Is recruited by release factors to stalled ribosomes together with SMG1 and SMG9 (forming the SMG1C protein kinase complex) and, in the SMG1C complex, is required to mediate the recruitment of SMG1 to the ribosome:SURF complex and to suppress SMG1 kinase activity until the ribosome:SURF complex locates the exon junction complex (EJC). Acts as a regulator of kinase activity. In Bos taurus (Bovine), this protein is Nonsense-mediated mRNA decay factor SMG8 (SMG8).